Here is a 384-residue protein sequence, read N- to C-terminus: Probable inactive linolenate hydroperoxide lyase (384 aa).

Cys-346 lines the heme pocket.

Belongs to the cytochrome P450 family. It depends on heme as a cofactor. Expressed in roots, leaves, flowers and siliques.

The protein is Probable inactive linolenate hydroperoxide lyase of Arabidopsis thaliana (Mouse-ear cress).